The primary structure comprises 310 residues: HTH-type transcriptional activator TtdR (310 aa).

In terms of domain architecture, HTH lysR-type spans 6-63 (PLAKDLQVLVEIVHSGSFSAAAATLGQTPAFVTKRIQILENTLATTLLNRSARGVALT). Positions 23–42 (FSAAAATLGQTPAFVTKRIQ) form a DNA-binding region, H-T-H motif.

The protein belongs to the LysR transcriptional regulatory family.

Its function is as follows. Positive regulator required for L-tartrate-dependent anaerobic growth on glycerol. Induces expression of the ttdA-ttdB-ygjE operon. The protein is HTH-type transcriptional activator TtdR (ttdR) of Escherichia coli O6:K15:H31 (strain 536 / UPEC).